We begin with the raw amino-acid sequence, 358 residues long: Uroporphyrinogen decarboxylase (358 aa).

Residues 29–33 (RQAGR), Phe-48, Asp-79, Tyr-155, Ser-210, and His-330 each bind substrate.

The protein belongs to the uroporphyrinogen decarboxylase family. In terms of assembly, homodimer.

Its subcellular location is the cytoplasm. It catalyses the reaction uroporphyrinogen III + 4 H(+) = coproporphyrinogen III + 4 CO2. It participates in porphyrin-containing compound metabolism; protoporphyrin-IX biosynthesis; coproporphyrinogen-III from 5-aminolevulinate: step 4/4. Functionally, catalyzes the decarboxylation of four acetate groups of uroporphyrinogen-III to yield coproporphyrinogen-III. This chain is Uroporphyrinogen decarboxylase, found in Bordetella parapertussis (strain 12822 / ATCC BAA-587 / NCTC 13253).